The following is a 132-amino-acid chain: Large ribosomal subunit protein uL14 (132 aa).

It belongs to the universal ribosomal protein uL14 family. As to quaternary structure, part of the 50S ribosomal subunit. Forms a cluster with proteins L3 and L24e, part of which may contact the 16S rRNA in 2 intersubunit bridges.

Functionally, binds to 23S rRNA. Forms part of two intersubunit bridges in the 70S ribosome. The polypeptide is Large ribosomal subunit protein uL14 (Methanosphaera stadtmanae (strain ATCC 43021 / DSM 3091 / JCM 11832 / MCB-3)).